A 566-amino-acid chain; its full sequence is Probable cytochrome P450 519D1 (566 aa).

Residues 1 to 21 form a helical membrane-spanning segment; sequence MNVFVLTFFICIIYLLFDLIK. The tract at residues 471–491 is disordered; sequence FNNNNNNNNNNNNNNSNNKHK. Over residues 472 to 487 the composition is skewed to low complexity; the sequence is NNNNNNNNNNNNNNSN. Cysteine 510 lines the heme pocket.

This sequence belongs to the cytochrome P450 family. Heme is required as a cofactor.

The protein localises to the membrane. The sequence is that of Probable cytochrome P450 519D1 (cyp519D1) from Dictyostelium discoideum (Social amoeba).